A 720-amino-acid polypeptide reads, in one-letter code: Putative glutamine--fructose-6-phosphate aminotransferase [isomerizing] (720 aa).

Cys2 functions as the Nucleophile; for GATase activity in the catalytic mechanism. Residues 2-321 (CGIFGYCNFL…DNDIAHIYDG (320 aa)) enclose the Glutamine amidotransferase type-2 domain. The segment covering 266-280 (STTSTFNHGSSTETP) has biased composition (polar residues). A disordered region spans residues 266–285 (STTSTFNHGSSTETPAENGL). SIS domains follow at residues 393–532 (WLTE…DLVS) and 565–710 (CDKK…VDLP).

It catalyses the reaction D-fructose 6-phosphate + L-glutamine = D-glucosamine 6-phosphate + L-glutamate. It participates in nucleotide-sugar biosynthesis; UDP-N-acetyl-alpha-D-glucosamine biosynthesis; alpha-D-glucosamine 6-phosphate from D-fructose 6-phosphate: step 1/1. Functionally, involved in amino sugar synthesis (formation of chitin, supplies the amino sugars of asparagine-linked oligosaccharides of glycoproteins). This chain is Putative glutamine--fructose-6-phosphate aminotransferase [isomerizing], found in Saccharomyces cerevisiae (strain RM11-1a) (Baker's yeast).